A 500-amino-acid chain; its full sequence is MSKAKKTAVTPTREENFPEWYQQVIKASDMAENSPVRGCMVIKPWGYGIWEAIQRDLDRRIKETGHENCYFPLFIPLSFLEKEAAHVEGFAKEMAVVTHHRLVAEDGKLVPSGKLEEPLVVRPTSETIIGDAFARWIQSYRDLPMLVNQWANVVRWEMRPRIFLRTAEFLWQEGHTAHATAEEAMDETLKMLEVYRVMAEEVLAMPVIVGEKPAHERFPGADKTYSIEAMMQDGKALQAGTSHFLGQHFSKAQNIRYQTAQGGEEFCYTTSWGVSTRLIGGVIMSHADDNGLRVPPRIAPKQIVFVPITRADGDEALIEDFLAPIVKDLSAQSFGGERLRVHVDRRPLAPPEKRWEWVKKGAPIICEVGPRDVAGGSVAMIRRDGELKGQITPKDELVSRAAAILEDIQKTLFTQAATALKERTVTVRTLDDFLAVFADDTTFGRKFVRARWCGDSDTLAKLDEYSITIRNVPFDQDGEAGTCVLSGRPATQEVIFAKSY.

The protein belongs to the class-II aminoacyl-tRNA synthetase family. ProS type 3 subfamily. Homodimer.

The protein localises to the cytoplasm. It catalyses the reaction tRNA(Pro) + L-proline + ATP = L-prolyl-tRNA(Pro) + AMP + diphosphate. Its function is as follows. Catalyzes the attachment of proline to tRNA(Pro) in a two-step reaction: proline is first activated by ATP to form Pro-AMP and then transferred to the acceptor end of tRNA(Pro). This chain is Proline--tRNA ligase, found in Paramagnetospirillum magneticum (strain ATCC 700264 / AMB-1) (Magnetospirillum magneticum).